Consider the following 241-residue polypeptide: Cobalt transport protein CbiM (241 aa).

Residues 1-24 (MKKIKIISFSVAYLILLTPIYASA) form the signal peptide. 6 helical membrane-spanning segments follow: residues 30-50 (GFLP…FIVG), 67-87 (LLLG…LPSV), 99-119 (LGTI…VLIF), 131-151 (TLGA…YFIF), 160-180 (SLAV…VTSL), and 202-222 (GIFA…TLIV).

This sequence belongs to the CbiM family. As to quaternary structure, forms an energy-coupling factor (ECF) transporter complex composed of an ATP-binding protein (A component, CbiO), a transmembrane protein (T component, CbiQ) and 2 possible substrate-capture proteins (S components, CbiM and CbiN) of unknown stoichimetry.

The protein localises to the cell membrane. The protein operates within cofactor biosynthesis; adenosylcobalamin biosynthesis. Part of the energy-coupling factor (ECF) transporter complex CbiMNOQ involved in cobalt import. The protein is Cobalt transport protein CbiM of Acetoanaerobium sticklandii (strain ATCC 12662 / DSM 519 / JCM 1433 / CCUG 9281 / NCIMB 10654 / HF) (Clostridium sticklandii).